Here is a 129-residue protein sequence, read N- to C-terminus: 3-aminoacrylate deaminase RutC (129 aa).

Belongs to the RutC family.

It carries out the reaction (Z)-3-aminoacrylate + H2O + H(+) = 3-oxopropanoate + NH4(+). In terms of biological role, involved in pyrimidine catabolism. Catalyzes the deamination of 3-aminoacrylate to malonic semialdehyde, a reaction that can also occur spontaneously. RutC may facilitate the reaction and modulate the metabolic fitness, rather than catalyzing essential functions. The sequence is that of 3-aminoacrylate deaminase RutC from Caulobacter vibrioides (strain ATCC 19089 / CIP 103742 / CB 15) (Caulobacter crescentus).